The primary structure comprises 477 residues: Transcription factor Sox-9-A (477 aa).

Disordered stretches follow at residues 1-66 and 157-274; these read MNLL…ETED and EAER…FRDV. The segment covering 27–42 has biased composition (low complexity); sequence SDDSAGSPCPSGSGSD. Composition is skewed to basic and acidic residues over residues 56–66 and 157–174; these read GDQELKKETED and EAER…DYKY. Residue Lys-61 forms a Glycyl lysine isopeptide (Lys-Gly) (interchain with G-Cter in SUMO) linkage. The tract at residues 63-103 is dimerization (DIM); sequence ETEDEKFPVCIREAVSQVLKGYDWTLVPMPVRVNGSSKNKP. The PQA stretch occupies residues 63-103; that stretch reads ETEDEKFPVCIREAVSQVLKGYDWTLVPMPVRVNGSSKNKP. The HMG box DNA-binding region spans 105 to 173; the sequence is VKRPMNAFMV…QHKKDHPDYK (69 aa). Positions 211–222 are enriched in low complexity; sequence SPHSSSSMSEVH. Residues 224 to 308 are transactivation domain (TAM); that stretch reads PGEHSGQSQG…LPPNGHPGVG (85 aa). 2 consecutive short sequence motifs (9aaTAD) follow at residues 276 to 285 and 291 to 299; these read IGELSSEVIS and DVNEFDQYL. The interval 301–384 is disordered; the sequence is PNGHPGVGST…SDQQQQHSPQ (84 aa). Composition is skewed to polar residues over residues 308 to 328 and 346 to 361; these read GSTQ…SATT and HSLS…SQQR. The tract at residues 361 to 477 is transactivation domain (TAC); that stretch reads RTHIKTEQLS…QPVYTQLTRP (117 aa). Lys-365 participates in a covalent cross-link: Glycyl lysine isopeptide (Lys-Gly) (interchain with G-Cter in SUMO). Over residues 370-384 the composition is skewed to low complexity; that stretch reads SPSHYSDQQQQHSPQ. The short motif at 428-436 is the 9aaTAD 3 element; sequence SGLYSTFSY. The disordered stretch occupies residues 446 to 477; sequence TPIADTTGVPSIPQTHSPQHWEQPVYTQLTRP. Over residues 453-477 the composition is skewed to polar residues; that stretch reads GVPSIPQTHSPQHWEQPVYTQLTRP.

In terms of assembly, interacts with the sumoylation factors ube2i/ubc9 and sumo1. Post-translationally, sumoylated. Lys-365 is the major site of sumoylation, although sumoylation at Lys-61 also occurs. Sumoylation plays a key role in regulating formation of the neural crest and otic placode. In terms of tissue distribution, from mid-gastrula (stage 10.5-11), expressed in a ring around the blastopore, with expression decreasing toward the dorsal side. At stage 12, expression around the blastopore decreases and begins to increase lateral to the neural plate in the presumptive neural crest, where expression dramatically increases around stage 14. Also expressed in the otic placode as early as stage 13/14. By the tailbud stage expression is restricted to the otic cup and then throughout the otic vesicle, with more intense staining at the dorsal-most region, the prospective region of the semicircular canals and endolymphatic duct. At the early tailbud stage (stage 23), expressed in migrating cranial neural crest cells and in the trunk neural crest. Also expressed in the genital ridges, developing eye, nasal placode and prospective pineal gland. Around stage 25, expression is down-regulated in the trunk neural crest but persists in the migrating cranial crest cells as they populate the pharyngeal arches, otic placode, developing eye, genital ridges and notochord. By stage 31, expression remains strong in the pharyngeal arches. Also expressed in the pancreas; first expressed at stage 25 in the pancreatic anlagen, dorsally in diverticulum. As development proceeds, expression continues in pancreatic tissue, being restricted to ventral and dorsal pancreatic buds.

Its subcellular location is the nucleus. It is found in the cytoplasm. In terms of biological role, transcription factor that plays a key role in chondrocytes differentiation and skeletal development. Specifically binds the 5'-ACAAAG-3' DNA motif present in enhancers and super-enhancers and promotes expression of genes important for chondrogenesis, including COL2A1. Plays a central role in successive steps of chondrocyte differentiation. Absolutely required for precartilaginous condensation, the first step in chondrogenesis during which skeletal progenitors differentiate into prechondrocytes. Together with SOX5 and SOX6, required for overt chondrogenesis when condensed prechondrocytes differentiate into early stage chondrocytes, the second step in chondrogenesis. Later, required to direct hypertrophic maturation and block osteoblast differentiation of growth plate chondrocytes: maintains chondrocyte columnar proliferation, delays prehypertrophy and then prevents osteoblastic differentiation of chondrocytes. Also required for chondrocyte hypertrophy, both indirectly, by keeping the lineage fate of chondrocytes, and directly, by remaining present in upper hypertrophic cells. Low lipid levels are the main nutritional determinant for chondrogenic commitment of skeletal progenitor cells: when lipids levels are low, FOXO transcription factors promote expression of SOX9, which induces chondrogenic commitment and suppresses fatty acid oxidation. In addition to cartilage development, also acts as a regulator of proliferation and differentiation in epithelial stem/progenitor cells. Involved in development of the cranial neural crest, which is fated to form skeletal elements. Also required for otic placode specification during inner ear development. The polypeptide is Transcription factor Sox-9-A (sox9-a) (Xenopus laevis (African clawed frog)).